The chain runs to 295 residues: Histone deacetylase HDT1 (295 aa).

Residues 105-271 (SDFSDSSEED…TPNSAGQLSC (167 aa)) are disordered. Residues 109–118 (DSSEEDEELA) show a composition bias toward acidic residues. The segment covering 123-135 (DNGKPELKAEGAK) has biased composition (basic and acidic residues). Positions 159-199 (EDDDSDDESDDDLAGEDESGSSDEMDDDSNSEEESDGDDEE) are enriched in acidic residues. Residues 200–213 (TPAKKVDQGKKRPN) are compositionally biased toward basic and acidic residues. Residues 254-271 (TPNSTKGQTPNSAGQLSC) are compositionally biased toward polar residues. The C2H2-type zinc-finger motif lies at 269-292 (LSCASCKKSFTNEAGLQQHKKAKH).

This sequence belongs to the histone deacetylase HD2 family.

The protein resides in the nucleus. The protein localises to the nucleolus. In terms of biological role, mediates the deacetylation of lysine residues on the N-terminal part of the core histones (H2A, H2B, H3 and H4). Histone deacetylation gives a tag for epigenetic repression and plays an important role in transcriptional regulation, cell cycle progression and developmental events. This chain is Histone deacetylase HDT1 (HDT1), found in Glycine max (Soybean).